We begin with the raw amino-acid sequence, 892 residues long: Chromodomain-helicase-DNA-binding protein 3 (892 aa).

The span at 1–20 (MSSKRGADPDWKTPGKASKD) shows a compositional bias: basic and acidic residues. A disordered region spans residues 1-29 (MSSKRGADPDWKTPGKASKDKRPKTNAKK). The PHD-type zinc finger occupies 35 to 82 (EEYCKVCSDGGDLLCCDSCPSVYHRTCLSPPLKSIPKGDWICPRCIPL). Chromo domains lie at 84–156 (GKAE…PSLE) and 179–240 (LLVQ…GRQR). The Helicase ATP-binding domain occupies 279–458 (RYSWGQGIPT…FHLLNFLSSG (180 aa)). 292–299 (DEMGLGKT) is an ATP binding site. Residues 409-412 (DEAH) carry the DEAH box motif. Positions 590 to 739 (LLSKMLKQLK…LTHLVVRPGM (150 aa)) constitute a Helicase C-terminal domain. Residues 839–892 (SQPKLPKKQKKQSQQSQVDVESIMGKGKRIRKEIDYSNQYPSPNRATPSSIVLM) form a disordered region. Over residues 874-892 (YSNQYPSPNRATPSSIVLM) the composition is skewed to polar residues.

This sequence belongs to the SNF2/RAD54 helicase family. As to quaternary structure, monomer.

It is found in the nucleus. It localises to the chromosome. It carries out the reaction ATP + H2O = ADP + phosphate + H(+). ATPase activity is stimulated by binding to DNA or nucleosomes, but is strongly activated by nucleosomes. Its function is as follows. ATP-dependent chromatin-remodeling factor which acts in nucleosome-remodeling by catalyzing ATP-dependent nucleosome mobilization. Likely to be involved in the regulation of transcription. The chain is Chromodomain-helicase-DNA-binding protein 3 from Drosophila melanogaster (Fruit fly).